We begin with the raw amino-acid sequence, 227 residues long: Cytochrome c oxidase subunit 2 (227 aa).

Over 1 to 14 (MAYPFQLGFQDATS) the chain is Mitochondrial intermembrane. A helical transmembrane segment spans residues 15 to 45 (PIMEELLHFHDHTLMIVFLISSLVLYIISLM). Residues 46–59 (LTTKLTHTSTMDAQ) lie on the Mitochondrial matrix side of the membrane. The chain crosses the membrane as a helical span at residues 60-87 (EVETIWTILPAIILILIALPSLRILYMM). Over 88-227 (DEINNPSLTV…YFEKWSASML (140 aa)) the chain is Mitochondrial intermembrane. Cu cation is bound by residues His-161, Cys-196, Glu-198, Cys-200, His-204, and Met-207. Glu-198 is a Mg(2+) binding site. At Tyr-218 the chain carries Phosphotyrosine.

Belongs to the cytochrome c oxidase subunit 2 family. As to quaternary structure, component of the cytochrome c oxidase (complex IV, CIV), a multisubunit enzyme composed of 14 subunits. The complex is composed of a catalytic core of 3 subunits MT-CO1, MT-CO2 and MT-CO3, encoded in the mitochondrial DNA, and 11 supernumerary subunits COX4I, COX5A, COX5B, COX6A, COX6B, COX6C, COX7A, COX7B, COX7C, COX8 and NDUFA4, which are encoded in the nuclear genome. The complex exists as a monomer or a dimer and forms supercomplexes (SCs) in the inner mitochondrial membrane with NADH-ubiquinone oxidoreductase (complex I, CI) and ubiquinol-cytochrome c oxidoreductase (cytochrome b-c1 complex, complex III, CIII), resulting in different assemblies (supercomplex SCI(1)III(2)IV(1) and megacomplex MCI(2)III(2)IV(2)). Found in a complex with TMEM177, COA6, COX18, COX20, SCO1 and SCO2. Interacts with TMEM177 in a COX20-dependent manner. Interacts with COX20. Interacts with COX16. The cofactor is Cu cation.

It is found in the mitochondrion inner membrane. It carries out the reaction 4 Fe(II)-[cytochrome c] + O2 + 8 H(+)(in) = 4 Fe(III)-[cytochrome c] + 2 H2O + 4 H(+)(out). In terms of biological role, component of the cytochrome c oxidase, the last enzyme in the mitochondrial electron transport chain which drives oxidative phosphorylation. The respiratory chain contains 3 multisubunit complexes succinate dehydrogenase (complex II, CII), ubiquinol-cytochrome c oxidoreductase (cytochrome b-c1 complex, complex III, CIII) and cytochrome c oxidase (complex IV, CIV), that cooperate to transfer electrons derived from NADH and succinate to molecular oxygen, creating an electrochemical gradient over the inner membrane that drives transmembrane transport and the ATP synthase. Cytochrome c oxidase is the component of the respiratory chain that catalyzes the reduction of oxygen to water. Electrons originating from reduced cytochrome c in the intermembrane space (IMS) are transferred via the dinuclear copper A center (CU(A)) of subunit 2 and heme A of subunit 1 to the active site in subunit 1, a binuclear center (BNC) formed by heme A3 and copper B (CU(B)). The BNC reduces molecular oxygen to 2 water molecules using 4 electrons from cytochrome c in the IMS and 4 protons from the mitochondrial matrix. The sequence is that of Cytochrome c oxidase subunit 2 (MT-CO2) from Felis catus (Cat).